Here is a 453-residue protein sequence, read N- to C-terminus: Glutamyl-tRNA(Gln) amidotransferase subunit A (453 aa).

Active-site charge relay system residues include Lys-53 and Ser-128. Ser-152 (acyl-ester intermediate) is an active-site residue.

The protein belongs to the amidase family. GatA subfamily. As to quaternary structure, heterotrimer of A, B and C subunits.

The enzyme catalyses L-glutamyl-tRNA(Gln) + L-glutamine + ATP + H2O = L-glutaminyl-tRNA(Gln) + L-glutamate + ADP + phosphate + H(+). Allows the formation of correctly charged Gln-tRNA(Gln) through the transamidation of misacylated Glu-tRNA(Gln) in organisms which lack glutaminyl-tRNA synthetase. The reaction takes place in the presence of glutamine and ATP through an activated gamma-phospho-Glu-tRNA(Gln). The chain is Glutamyl-tRNA(Gln) amidotransferase subunit A from Helicobacter pylori (strain P12).